Reading from the N-terminus, the 2149-residue chain is Polyketide synthase 1 (2149 aa).

Residues 19 to 261 (FIFGDQSSCN…TRLAVHAPYH (243 aa)) are N-terminal acylcarrier protein transacylase domain (SAT). Residues 394 to 829 (ESKIAIIGMS…GGNTALLVED (436 aa)) form the Ketosynthase family 3 (KS3) domain. Catalysis depends on for beta-ketoacyl synthase activity residues Cys566, His701, and His745. The segment at 929–1233 (AFVFSGQGSQ…PSLMRNKDGW (305 aa)) is malonyl-CoA:ACP transacylase (MAT) domain. Residue Ser1018 is the For acyl/malonyl transferase activity of the active site. The interval 1310-1624 (TASVHRIVHE…RKVLNTAMPP (315 aa)) is product template (PT) domain. The segment at 1314 to 1447 (HRIVHESVDK…SSLHFERPKV (134 aa)) is N-terminal hotdog fold. Residues 1314-1619 (HRIVHESVDK…FQGIPRKVLN (306 aa)) enclose the PKS/mFAS DH domain. The active-site Proton acceptor; for dehydratase activity is His1346. The C-terminal hotdog fold stretch occupies residues 1474–1619 (LNSRMSSGVI…FQGIPRKVLN (146 aa)). Asp1533 functions as the Proton donor; for dehydratase activity in the catalytic mechanism. The segment at 1619–1657 (NTAMPPPKSQNEAPVRSAPAKPAAKPPKSASSEHSGHFA) is disordered. Low complexity predominate over residues 1635-1650 (SAPAKPAAKPPKSASS). Residues 1678 to 1752 (RNPMLAVFKI…DLATHLGLDT (75 aa)) form the Carrier 1 domain. O-(pantetheine 4'-phosphoryl)serine is present on Ser1712. Positions 1755-1790 (SDQSSGQSSSSGGLSPRSDSIGEITSSATTPPSLSP) are enriched in low complexity. Residues 1755–1796 (SDQSSGQSSSSGGLSPRSDSIGEITSSATTPPSLSPRGSVSG) are disordered. Residues 1793–1870 (SVSGSQCKDV…SFKHMFQQGH (78 aa)) form the Carrier 2 domain. Ser1830 carries the post-translational modification O-(pantetheine 4'-phosphoryl)serine. Positions 1882 to 2147 (LKQYRATSTL…ERVAAFIRST (266 aa)) are thioesterase (TE) domain. Ser1973 functions as the For thioesterase activity in the catalytic mechanism.

Functionally, polyketide synthase; part of the Pks1 gene cluster that mediates the biosynthesis of an anthraquinone derivative pigment that contributes to conidial pigmentation that provides protection from UV radiation, heat and cold stress. The polyketide synthase Pks1 produces 1-acetyl-2,4,6,8-tetrahydroxy-9,10-anthraquinone though condensation of acetyl-CoA with malonyl-CoA. The dehydratase EthD and the laccase Mlac1 further convert the anthraquinone derivative into the final conidial pigment. This chain is Polyketide synthase 1, found in Metarhizium majus (strain ARSEF 297).